The sequence spans 301 residues: tRNA uridine(34) hydroxylase (301 aa).

The 92-residue stretch at 121 to 212 folds into the Rhodanese domain; it reads NDKDTLVLDS…YLKNIKKKES (92 aa). The active-site Cysteine persulfide intermediate is the Cys-172.

This sequence belongs to the TrhO family.

It carries out the reaction uridine(34) in tRNA + AH2 + O2 = 5-hydroxyuridine(34) in tRNA + A + H2O. Its function is as follows. Catalyzes oxygen-dependent 5-hydroxyuridine (ho5U) modification at position 34 in tRNAs. In Pelagibacter ubique (strain HTCC1062), this protein is tRNA uridine(34) hydroxylase.